Consider the following 600-residue polypeptide: Probable pectin methyltransferase QUA3 (600 aa).

The Cytoplasmic portion of the chain corresponds to 1–18 (MGHVNLPASKRGNPRQWR). A helical; Signal-anchor for type II membrane protein membrane pass occupies residues 19-39 (LLDIVTAAFFGIVLLFFILLF). Topologically, residues 40-600 (TPLGDSMAAS…SLWKLPSNSH (561 aa)) are lumenal. N-linked (GlcNAc...) asparagine glycosylation occurs at asparagine 283.

This sequence belongs to the methyltransferase superfamily. As to expression, highly expressed and abundant in suspension-cultured cells, but low levels in seedlings.

It is found in the golgi apparatus membrane. It functions in the pathway glycan metabolism; pectin biosynthesis. Its function is as follows. S-adenosyl-L-methionine (SAM)-dependent methyltransferase (MTase) which mediates the methylesterification of the pectin homogalacturonan (HG) and thus regulates cell wall biosynthesis, at least in suspension-cultured cells. In Arabidopsis thaliana (Mouse-ear cress), this protein is Probable pectin methyltransferase QUA3.